The sequence spans 449 residues: tRNA modification GTPase MnmE (449 aa).

(6S)-5-formyl-5,6,7,8-tetrahydrofolate contacts are provided by R24, E81, and K121. The TrmE-type G domain maps to 218-375 (GLVVAITGPP…LIAALGKFAA (158 aa)). Residues 228–233 (NVGKST), 247–253 (SPHAGTT), and 272–275 (DTAG) contribute to the GTP site. Residues S232 and T253 each contribute to the Mg(2+) site. K449 contributes to the (6S)-5-formyl-5,6,7,8-tetrahydrofolate binding site.

The protein belongs to the TRAFAC class TrmE-Era-EngA-EngB-Septin-like GTPase superfamily. TrmE GTPase family. Homodimer. Heterotetramer of two MnmE and two MnmG subunits. Requires K(+) as cofactor.

It localises to the cytoplasm. Functionally, exhibits a very high intrinsic GTPase hydrolysis rate. Involved in the addition of a carboxymethylaminomethyl (cmnm) group at the wobble position (U34) of certain tRNAs, forming tRNA-cmnm(5)s(2)U34. The chain is tRNA modification GTPase MnmE from Rhodopseudomonas palustris (strain BisB18).